A 336-amino-acid chain; its full sequence is Holliday junction branch migration complex subunit RuvB (336 aa).

Residues 4–184 are large ATPase domain (RuvB-L); it reads ADRLISAGTT…FGIVQRLEFY (181 aa). ATP-binding positions include I23, R24, G65, K68, T69, T70, 131-133, R174, Y184, and R221; that span reads EDY. T69 serves as a coordination point for Mg(2+). Residues 185–255 form a small ATPAse domain (RuvB-S) region; sequence QVPDLQYIVS…IAAQALDMLN (71 aa). The head domain (RuvB-H) stretch occupies residues 258–336; it reads AEGFDYMDRK…HFGITPPEMP (79 aa). Residues R294, R313, and R318 each contribute to the DNA site.

It belongs to the RuvB family. As to quaternary structure, homohexamer. Forms an RuvA(8)-RuvB(12)-Holliday junction (HJ) complex. HJ DNA is sandwiched between 2 RuvA tetramers; dsDNA enters through RuvA and exits via RuvB. An RuvB hexamer assembles on each DNA strand where it exits the tetramer. Each RuvB hexamer is contacted by two RuvA subunits (via domain III) on 2 adjacent RuvB subunits; this complex drives branch migration. In the full resolvosome a probable DNA-RuvA(4)-RuvB(12)-RuvC(2) complex forms which resolves the HJ.

It is found in the cytoplasm. It carries out the reaction ATP + H2O = ADP + phosphate + H(+). Functionally, the RuvA-RuvB-RuvC complex processes Holliday junction (HJ) DNA during genetic recombination and DNA repair, while the RuvA-RuvB complex plays an important role in the rescue of blocked DNA replication forks via replication fork reversal (RFR). RuvA specifically binds to HJ cruciform DNA, conferring on it an open structure. The RuvB hexamer acts as an ATP-dependent pump, pulling dsDNA into and through the RuvAB complex. RuvB forms 2 homohexamers on either side of HJ DNA bound by 1 or 2 RuvA tetramers; 4 subunits per hexamer contact DNA at a time. Coordinated motions by a converter formed by DNA-disengaged RuvB subunits stimulates ATP hydrolysis and nucleotide exchange. Immobilization of the converter enables RuvB to convert the ATP-contained energy into a lever motion, pulling 2 nucleotides of DNA out of the RuvA tetramer per ATP hydrolyzed, thus driving DNA branch migration. The RuvB motors rotate together with the DNA substrate, which together with the progressing nucleotide cycle form the mechanistic basis for DNA recombination by continuous HJ branch migration. Branch migration allows RuvC to scan DNA until it finds its consensus sequence, where it cleaves and resolves cruciform DNA. In Shigella sonnei (strain Ss046), this protein is Holliday junction branch migration complex subunit RuvB.